A 316-amino-acid polypeptide reads, in one-letter code: Ribosomal RNA small subunit methyltransferase H (316 aa).

Residues 35-37 (GGH), Asp55, Phe79, Asp101, and Gln108 contribute to the S-adenosyl-L-methionine site.

The protein belongs to the methyltransferase superfamily. RsmH family.

Its subcellular location is the cytoplasm. It carries out the reaction cytidine(1402) in 16S rRNA + S-adenosyl-L-methionine = N(4)-methylcytidine(1402) in 16S rRNA + S-adenosyl-L-homocysteine + H(+). In terms of biological role, specifically methylates the N4 position of cytidine in position 1402 (C1402) of 16S rRNA. In Vibrio vulnificus (strain CMCP6), this protein is Ribosomal RNA small subunit methyltransferase H.